The following is a 377-amino-acid chain: Succinyl-diaminopimelate desuccinylase (377 aa).

Residue histidine 67 participates in Zn(2+) binding. Residue aspartate 69 is part of the active site. Position 100 (aspartate 100) interacts with Zn(2+). The Proton acceptor role is filled by glutamate 134. Zn(2+) contacts are provided by glutamate 135, glutamate 163, and histidine 349.

This sequence belongs to the peptidase M20A family. DapE subfamily. As to quaternary structure, homodimer. Zn(2+) is required as a cofactor. It depends on Co(2+) as a cofactor.

The catalysed reaction is N-succinyl-(2S,6S)-2,6-diaminopimelate + H2O = (2S,6S)-2,6-diaminopimelate + succinate. The protein operates within amino-acid biosynthesis; L-lysine biosynthesis via DAP pathway; LL-2,6-diaminopimelate from (S)-tetrahydrodipicolinate (succinylase route): step 3/3. Its function is as follows. Catalyzes the hydrolysis of N-succinyl-L,L-diaminopimelic acid (SDAP), forming succinate and LL-2,6-diaminopimelate (DAP), an intermediate involved in the bacterial biosynthesis of lysine and meso-diaminopimelic acid, an essential component of bacterial cell walls. In Actinobacillus pleuropneumoniae serotype 3 (strain JL03), this protein is Succinyl-diaminopimelate desuccinylase.